An 85-amino-acid chain; its full sequence is Small ribosomal subunit protein bS20 (85 aa).

It belongs to the bacterial ribosomal protein bS20 family.

In terms of biological role, binds directly to 16S ribosomal RNA. The chain is Small ribosomal subunit protein bS20 from Lactobacillus johnsonii (strain CNCM I-12250 / La1 / NCC 533).